The chain runs to 437 residues: Carboxypeptidase A6 (437 aa).

A signal peptide spans methionine 1–serine 30. Positions histidine 31–arginine 129 are cleaved as a propeptide — activation peptide. Asparagine 89 and asparagine 153 each carry an N-linked (GlcNAc...) asparagine glycan. Residues valine 138–leucine 432 form the Peptidase M14 domain. Residues histidine 196 and glutamate 199 each contribute to the Zn(2+) site. Substrate is bound by residues histidine 196–glutamate 199, arginine 254, and asparagine 271–arginine 272. Cysteine 265 and cysteine 288 form a disulfide bridge. Residue histidine 324 coordinates Zn(2+). Substrate is bound by residues alanine 325–tyrosine 326 and tyrosine 376. The active-site Proton donor/acceptor is glutamate 398. Asparagine 427 is a glycosylation site (N-linked (GlcNAc...) asparagine).

It belongs to the peptidase M14 family. Requires Zn(2+) as cofactor. As to expression, expressed in the hippocampus, nucleus raphe, and cortex.

Its subcellular location is the secreted. It is found in the extracellular space. The protein resides in the extracellular matrix. Its function is as follows. May be involved in the proteolytic inactivation of enkephalins and neurotensin in some brain areas. May convert inactive angiotensin I into the biologically active angiotensin II. Releases a C-terminal amino acid, with preference for large hydrophobic C-terminal amino acids and shows only very weak activity toward small amino acids and histidine. This is Carboxypeptidase A6 (CPA6) from Homo sapiens (Human).